A 119-amino-acid chain; its full sequence is Large ribosomal subunit protein uL18 (119 aa).

This sequence belongs to the universal ribosomal protein uL18 family. Part of the 50S ribosomal subunit; part of the 5S rRNA/L5/L18/L25 subcomplex. Contacts the 5S and 23S rRNAs.

In terms of biological role, this is one of the proteins that bind and probably mediate the attachment of the 5S RNA into the large ribosomal subunit, where it forms part of the central protuberance. In Malacoplasma penetrans (strain HF-2) (Mycoplasma penetrans), this protein is Large ribosomal subunit protein uL18.